Reading from the N-terminus, the 279-residue chain is Arabinooligosaccharides transport system permease protein AraQ (279 aa).

The next 6 membrane-spanning stretches (helical) occupy residues 8-28, 79-99, 110-130, 140-160, 184-204, and 245-265; these read ILSWLLTIGFAFIAFIAVFPL, VWISIVIVVLSLLFSSMVGYA, FFFLLVLIILMIPFEILMLPL, VNTYTAVILPAIVAPIAVFFF, GIFFKIMLPLMGPSLAAMAIL, and ILLAGSVMTIVPIVILFIFFQ. Residues 75 to 264 enclose the ABC transmembrane type-1 domain; it reads FGNSVWISIV…VPIVILFIFF (190 aa).

This sequence belongs to the binding-protein-dependent transport system permease family. MalFG subfamily. The complex is composed of two ATP-binding proteins (MsmX), two transmembrane proteins (AraP and AraQ) and a solute-binding protein (AraN).

Its subcellular location is the cell membrane. Part of the ABC transporter complex AraNPQ involved in the uptake of arabinooligosaccharides. Responsible for the translocation of the substrate across the membrane. This Halalkalibacterium halodurans (strain ATCC BAA-125 / DSM 18197 / FERM 7344 / JCM 9153 / C-125) (Bacillus halodurans) protein is Arabinooligosaccharides transport system permease protein AraQ (araQ).